The primary structure comprises 744 residues: Tripartite motif-containing protein 2 (744 aa).

Ser10 is subject to Phosphoserine. The RING-type zinc finger occupies 23 to 64; that stretch reads CSICLERYKNPKVLPCLHTFCERCLQNYIPAHSLTLSCPVCR. The segment at 113–154 adopts a B box-type zinc-finger fold; that stretch reads GKPLSCPNHDGNVMEFYCQSCETAMCRECTEGEHAEHPTVPL. Residues Cys118, His121, Cys141, and His146 each contribute to the Zn(2+) site. A Filamin repeat occupies 320 to 421; it reads TTNAVASETV…IRGSPFKLKV (102 aa). Thr371 bears the Phosphothreonine mark. Phosphoserine occurs at positions 375, 424, and 428. The tract at residues 432-462 is disordered; sequence EGVKRRVKSPGSGHVKQKAVKRPASMYSTGK. 6 NHL repeats span residues 473 to 516, 520 to 563, 564 to 605, 609 to 652, 656 to 699, and 700 to 743; these read IFRV…FSND, KSRF…FSND, GKFK…FQPN, VTRF…FNQE, MLKF…FDGS, and GSFL…YRYL.

It belongs to the TRIM/RBCC family. In terms of assembly, forms homooligomers. Interacts with TRIM3; this interaction reduces TRIM2 activity. Interacts with myosin V; myosin V may not be a substrate for ubiquitination. Interacts with NEFL. Interacts with phosphorylated BCL2L11. Interacts with SIRPA. Post-translationally, RING-type zinc finger-dependent and UBE2D1-dependent autoubiquitination. As to expression, highly expressed in the cerebellum, hippocampus, retina and spinal cord. In the cerebellum, strongest expression in Purkinje cells and in the deep cerebellar nuclei. In retina, high expression in the ganglionic cell layer, inner nuclear layer and inthe outer plexiform layer. Particularly high expression in the hippocampus, in pyramidal cells of CA1-CA3 hippocampal areas and ingranule cells of the dentate gyrus.

The protein localises to the cytoplasm. The enzyme catalyses S-ubiquitinyl-[E2 ubiquitin-conjugating enzyme]-L-cysteine + [acceptor protein]-L-lysine = [E2 ubiquitin-conjugating enzyme]-L-cysteine + N(6)-ubiquitinyl-[acceptor protein]-L-lysine.. Its pathway is protein modification; protein ubiquitination. UBE2D1-dependent E3 ubiquitin-protein ligase that mediates the ubiquitination of NEFL and of phosphorylated BCL2L11. Plays a neuroprotective function. May play a role in neuronal rapid ischemic tolerance. Plays a role in antiviral immunity and limits new world arenavirus infection independently of its ubiquitin ligase activity by decreasing virus internalization. This is Tripartite motif-containing protein 2 (Trim2) from Mus musculus (Mouse).